The chain runs to 156 residues: Small ribosomal subunit protein uS7 (156 aa).

Belongs to the universal ribosomal protein uS7 family. In terms of assembly, part of the 30S ribosomal subunit. Contacts proteins S9 and S11.

In terms of biological role, one of the primary rRNA binding proteins, it binds directly to 16S rRNA where it nucleates assembly of the head domain of the 30S subunit. Is located at the subunit interface close to the decoding center, probably blocks exit of the E-site tRNA. The chain is Small ribosomal subunit protein uS7 from Phytoplasma mali (strain AT).